The primary structure comprises 383 residues: Deoxyguanosinetriphosphate triphosphohydrolase-like protein (383 aa).

The HD domain maps to 62–198 (RLTHSLEVST…ASLADDISYI (137 aa)).

Belongs to the dGTPase family. Type 2 subfamily.

This Rickettsia prowazekii (strain Madrid E) protein is Deoxyguanosinetriphosphate triphosphohydrolase-like protein.